The primary structure comprises 463 residues: MENTLVKSLYRDTDKYAGQTVQVSGWIRNLRDSKAFGFIELNDGSFFKSVQIVFDTELDNFKEIAKLPLSSSVKVEGKVIATPGAKQPFEIKAEKIDIEGLSDSDYPLQKKRHTFEYLRTIAHLRPRTNAFSATFRVRSIAAFAIHQFFQERGFVHVHTPIITGSDTEGAGEMFRVTTQDLNNVPKGEDGQVDESKDFFGKETNLTVSGQLNAEAYALAFRDVYTFGPTFRAENSNTTRHAAEFWMVEPEIAFAELGDVMNLTEDMLKYAMKYVLEHAPEEMEFFNSFVDKTVLERMNNVINSDFGRITYTEAIKVLQESGADFKYPVEWGIDLQTEHERYLSEEIFKRPVFVTDYPKDIKAFYMRLNDDGKTVAATDLLVPGIGELIGGSQREERMDVLVDRIKELGMNEEDYWWYLELRKYGGTKHAGFGLGFERFLMYITGMANIRDVIPFPRTPGSSEF.

It belongs to the class-II aminoacyl-tRNA synthetase family. In terms of assembly, homodimer.

The protein localises to the cytoplasm. It catalyses the reaction tRNA(Asn) + L-asparagine + ATP = L-asparaginyl-tRNA(Asn) + AMP + diphosphate + H(+). In Bacillus cereus (strain ZK / E33L), this protein is Asparagine--tRNA ligase.